We begin with the raw amino-acid sequence, 246 residues long: 14-3-3 protein beta/alpha (246 aa).

Residue Met-1 is modified to N-acetylmethionine. An N-acetylthreonine; in 14-3-3 protein beta/alpha, N-terminally processed modification is found at Thr-2. Residue Thr-2 is modified to Phosphothreonine. Lys-5 is modified (N6-acetyllysine). N6-acetyllysine; alternate is present on Lys-51. Lys-51 participates in a covalent cross-link: Glycyl lysine isopeptide (Lys-Gly) (interchain with G-Cter in SUMO2); alternate. A Phosphoserine modification is found at Ser-60. N6-acetyllysine is present on Lys-70. 3'-nitrotyrosine occurs at positions 84 and 106. An N6-acetyllysine modification is found at Lys-117. Phosphoserine occurs at positions 186 and 232.

This sequence belongs to the 14-3-3 family. Homodimer. Interacts with SAMSN1 and PRKCE. Interacts with AKAP13. Interacts with SSH1 and TORC2/CRTC2. Interacts with ABL1; the interaction results in cytoplasmic location of ABL1 and inhibition of cABL-mediated apoptosis. Interacts with ROR2 (dimer); the interaction results in phosphorylation of YWHAB on tyrosine residues. Interacts with GAB2. Interacts with YAP1 (phosphorylated form). Interacts with the phosphorylated (by AKT1) form of SRPK2. Interacts with PKA-phosphorylated AANAT. Interacts with MYO1C. Interacts with SIRT2. Interacts with the 'Thr-369' phosphorylated form of DAPK2. Interacts with PI4KB, TBC1D22A and TBC1D22B. Interacts with the 'Ser-1134' and 'Ser-1161' phosphorylated form of SOS1. Interacts (via phosphorylated form) with YWHAB; this interaction occurs in a protein kinase AKT1-dependent manner. Interacts with SLITRK1. Interacts with SYNPO2 (phosphorylated form); YWHAB competes with ACTN2 for interaction with SYNPO2. Interacts with RIPOR2 (via phosphorylated form); this interaction occurs in a chemokine-dependent manner and does not compete for binding of RIPOR2 with RHOA nor blocks inhibition of RIPOR2-mediated RHOA activity. Interacts with MARK2 and MARK3. Interacts with TESK1; the interaction is dependent on the phosphorylation of TESK1 'Ser-439' and inhibits TESK1 kinase activity. Interacts with MEFV. Interacts with HDAC4. Interacts with ADAM22 (via C-terminus). Post-translationally, the alpha, brain-specific form differs from the beta form in being phosphorylated. Phosphorylated on Ser-60 by protein kinase C delta type catalytic subunit in a sphingosine-dependent fashion.

The protein localises to the cytoplasm. It localises to the melanosome. Adapter protein implicated in the regulation of a large spectrum of both general and specialized signaling pathways. Binds to a large number of partners, usually by recognition of a phosphoserine or phosphothreonine motif. Binding generally results in the modulation of the activity of the binding partner. Negative regulator of osteogenesis. Blocks the nuclear translocation of the phosphorylated form (by AKT1) of SRPK2 and antagonizes its stimulatory effect on cyclin D1 expression resulting in blockage of neuronal apoptosis elicited by SRPK2. Negative regulator of signaling cascades that mediate activation of MAP kinases via AKAP13. This Bos taurus (Bovine) protein is 14-3-3 protein beta/alpha (YWHAB).